The following is a 514-amino-acid chain: Probable drug/proton antiporter YHK8 (514 aa).

The Cytoplasmic portion of the chain corresponds to 1-74 (MVAEFQIASA…RHMSTARRYY (74 aa)). A helical transmembrane segment spans residues 75 to 95 (ISSLITFTSMVITMISSSWTL). Residues 96–111 (PSTHIIEHFHISHEVS) lie on the Extracellular side of the membrane. Residues 112–132 (TLGITLYVFGLGIGPLFLSPL) traverse the membrane as a helical segment. Topologically, residues 133 to 141 (SELYGRRIT) are cytoplasmic. A helical transmembrane segment spans residues 142–162 (FLYALTLSIIWQCLTIWSKTI). Residues 163–170 (TGVMFGRF) lie on the Extracellular side of the membrane. Residues 171-191 (LSGFFGSAFLSVAGGAIADIF) form a helical membrane-spanning segment. The Cytoplasmic portion of the chain corresponds to 192–200 (DKDQIGIPM). The helical transmembrane segment at 201 to 221 (AIYTTSAFLGPSLGPIIGGAL) threads the bilayer. Topologically, residues 222–227 (YHQSYK) are extracellular. Residues 228 to 248 (WTFITLLITSGCCLVMIIFTI) traverse the membrane as a helical segment. Residues 249–307 (PETYKPMLLIRKAKRLRKEKNDQRYYAVLEVTREQTSLLSAIFLSTKRPFGLLLRDRMM) lie on the Cytoplasmic side of the membrane. A helical membrane pass occupies residues 308–328 (GVLCFYTGLELAIIYLYFVAF). Residues 329 to 342 (PYVFKKLYNFGPME) lie on the Extracellular side of the membrane. Residues 343–363 (IACSYIGIMVGMILSAPTCLL) form a helical membrane-spanning segment. The Cytoplasmic segment spans residues 364–386 (FQKTFEWRVKRNNGVKTPEMRFE). A helical transmembrane segment spans residues 387–407 (PLFYGAFLTPVGLFIFAFTCY). Residues 408–412 (KHVHW) are Extracellular-facing. Residues 413-433 (IAPIIGSAIFGSGVYFVFTGV) form a helical membrane-spanning segment. The Cytoplasmic segment spans residues 434–447 (FAYTVDAYRRYAAS). The chain crosses the membrane as a helical span at residues 448 to 468 (GMACNTFVRCIMAGVFPLFGL). Residues 469–477 (QMYKSMGVN) are Extracellular-facing. A helical membrane pass occupies residues 478 to 498 (WAGFLLAMVTVAMIPVPFLFT). Residues 499–514 (KYGARLRAKSPYAWDD) are Cytoplasmic-facing.

The protein belongs to the major facilitator superfamily. CAR1 family.

It localises to the membrane. Functionally, probable drug/proton antiporter. This is Probable drug/proton antiporter YHK8 (YHK8) from Saccharomyces cerevisiae (strain ATCC 204508 / S288c) (Baker's yeast).